Here is a 240-residue protein sequence, read N- to C-terminus: tRNA (guanine-N(1)-)-methyltransferase (240 aa).

Residues glycine 108 and leucine 127 to leucine 132 contribute to the S-adenosyl-L-methionine site.

This sequence belongs to the RNA methyltransferase TrmD family. In terms of assembly, homodimer.

The protein localises to the cytoplasm. It carries out the reaction guanosine(37) in tRNA + S-adenosyl-L-methionine = N(1)-methylguanosine(37) in tRNA + S-adenosyl-L-homocysteine + H(+). Specifically methylates guanosine-37 in various tRNAs. The chain is tRNA (guanine-N(1)-)-methyltransferase from Streptococcus sanguinis (strain SK36).